Here is a 288-residue protein sequence, read N- to C-terminus: NAD(P)H-hydrate epimerase (288 aa).

A mitochondrion-targeting transit peptide spans 1–48 (MSALRALLGLGLLAAGSRLRRVPGRAGACPAGSAWWEARRPHSGGGGE). In terms of domain architecture, YjeF N-terminal spans 65–275 (AQAVDEELFN…ALEKKYQLNL (211 aa)). 119–123 (NNGGD) serves as a coordination point for (6S)-NADPHX. Position 120 (asparagine 120) interacts with K(+). At lysine 144 the chain carries N6-succinyllysine. Aspartate 185 serves as a coordination point for K(+). (6S)-NADPHX contacts are provided by residues 189-195 (GFSFKGD) and aspartate 218. K(+) is bound at residue serine 221.

It belongs to the NnrE/AIBP family. Homodimer. Interacts with APOA1 and APOA2. It depends on K(+) as a cofactor. Post-translationally, undergoes physiological phosphorylation during sperm capacitation, downstream to PKA activation.

Its subcellular location is the mitochondrion. It localises to the secreted. It carries out the reaction (6R)-NADHX = (6S)-NADHX. It catalyses the reaction (6R)-NADPHX = (6S)-NADPHX. Functionally, catalyzes the epimerization of the S- and R-forms of NAD(P)HX, a damaged form of NAD(P)H that is a result of enzymatic or heat-dependent hydration. This is a prerequisite for the S-specific NAD(P)H-hydrate dehydratase to allow the repair of both epimers of NAD(P)HX. Accelerates cholesterol efflux from endothelial cells to high-density lipoprotein (HDL) and thereby regulates angiogenesis. This Canis lupus familiaris (Dog) protein is NAD(P)H-hydrate epimerase.